The primary structure comprises 367 residues: Molybdopterin synthase catalytic subunit (367 aa).

Residues H101 to R102, K117, and K124 to E126 each bind substrate. Residues H326–K345 form a disordered region.

Belongs to the MoaE family. MOCS2B subfamily. In terms of assembly, heterotetramer; composed of 2 small (Mocs2A) and 2 large (Mocs2B) subunits.

Its subcellular location is the cytoplasm. The catalysed reaction is 2 [molybdopterin-synthase sulfur-carrier protein]-C-terminal-Gly-aminoethanethioate + cyclic pyranopterin phosphate + H2O = molybdopterin + 2 [molybdopterin-synthase sulfur-carrier protein]-C-terminal Gly-Gly + 2 H(+). It participates in cofactor biosynthesis; molybdopterin biosynthesis. In terms of biological role, catalytic subunit of the molybdopterin synthase complex, a complex that catalyzes the conversion of precursor Z into molybdopterin. Acts by mediating the incorporation of 2 sulfur atoms from thiocarboxylated Mocs2A into precursor Z to generate a dithiolene group. In Drosophila sechellia (Fruit fly), this protein is Molybdopterin synthase catalytic subunit.